Consider the following 549-residue polypeptide: uncharacterized protein (549 aa).

A run of 12 helical transmembrane segments spans residues 1–21 (MEIF…GVVT), 28–48 (IPLP…TFGL), 50–70 (VEFD…FADG), 85–105 (IFGL…FLIY), 106–126 (WVVP…LSPT), 165–185 (FAVA…TVEF), 187–207 (KVAI…GRSL), 222–242 (IVLL…IGVS), 278–298 (LEFV…PGIL), 310–330 (NVEI…LMLV), 361–381 (ILIA…VLSI), and 398–418 (VFLA…MLPI).

The protein belongs to the monovalent cation:proton antiporter 1 (CPA1) transporter (TC 2.A.36) family.

The protein localises to the cell inner membrane. This is an uncharacterized protein from Escherichia coli (strain K12).